A 168-amino-acid polypeptide reads, in one-letter code: MKLLKALAVLSLATISSHSFAVDGFQNVKFGASKTEVRNAYQKCQWQKDEYDLFCPNFTLGAIKDTGAYFYFIDDKFERIAINIPNVNIDGIGQALSEKYTLSSQPTQRELANPKPNNVYDFGFDKDTILIRYTYDNDMTEEIFLIYTTPDFNNKLQTKDAQSVKDQL.

Positions 1–21 (MKLLKALAVLSLATISSHSFA) form a signal peptide, or 19.

This is an uncharacterized protein from Haemophilus influenzae (strain ATCC 51907 / DSM 11121 / KW20 / Rd).